A 148-amino-acid chain; its full sequence is Arginine repressor (148 aa).

The protein belongs to the ArgR family.

The protein localises to the cytoplasm. It functions in the pathway amino-acid biosynthesis; L-arginine biosynthesis [regulation]. Functionally, regulates arginine biosynthesis genes. The sequence is that of Arginine repressor from Koribacter versatilis (strain Ellin345).